We begin with the raw amino-acid sequence, 2282 residues long: Cation channel sperm-associated targeting subunit tau (2282 aa).

The segment at 1–118 is disordered; the sequence is MELPPPGNRR…RGKGKGTGTR (118 aa). Composition is skewed to polar residues over residues 11 to 41 and 50 to 87; these read VSINNPQETSGRVPTTSAGFPTQSSKISLKR and MMSNRSSGGQSLLPSSILQKTSLNPPGSLQSKPSNLSS. Basic and acidic residues predominate over residues 90 to 109; that stretch reads YADEEGKPLTDKNKDKDKGR. Residues 131 to 266 enclose the C2 domain; sequence QSDEMAIANQ…IQKGCFTEVM (136 aa). 10 disordered regions span residues 397-416, 656-679, 747-1066, 1104-1153, 1217-1240, 1426-1445, 1452-1515, 1542-1569, 1908-1928, and 2187-2222; these read MTKRDNKGSSIPSESNSSAL, EHEDQDPPYPGHSGSAGSDATWAE, NKLI…SHDP, SAKS…DKQS, YTNDEGYSPPPSVHSRPSDSTDDR, NSLLDSQTTSSTEQYSDSRS, RQNT…SLDK, ERRQQPEKDSESLIKHSSSSGSEHLEKT, NQANPLTRSPERPSDISLKKQ, and PKKSKSGARLLGKSPEDSHNQAKHCARPYTAPEPNK. Composition is skewed to polar residues over residues 750–760, 783–792, 800–841, 849–858, and 953–974; these read ITDSSFNTTKP, SDPSSNTTKP, DPSS…SDLN, IVSTISSDPN, and SARSSDPNKLSRDPSINSTKLS. Over residues 1104–1123 the composition is skewed to low complexity; sequence SAKSLDSNNSSASSSPTVNS. Residues 1124 to 1136 are compositionally biased toward polar residues; it reads DTTTNAAEPSGTK. Polar residues-rich tracts occupy residues 1452-1466 and 1473-1482; these read RQNTSSINPLDSSVS and DCQSISTQES. Residues 1484–1493 are compositionally biased toward basic and acidic residues; the sequence is YPVRDTKSDS. A compositionally biased stretch (acidic residues) spans 1495-1504; sequence NDTEEMELDS. 2 stretches are compositionally biased toward basic and acidic residues: residues 1542–1555 and 1916–1925; these read ERRQQPEKDSESLI and SPERPSDISL.

As to quaternary structure, component of the CatSper complex or CatSpermasome composed of the core pore-forming members CATSPER1, CATSPER2, CATSPER3 and CATSPER4 as well as auxiliary members CATSPERB, CATSPERG, CATSPERD, CATSPERE, CATSPERZ, C2CD6/CATSPERT, SLCO6C1, TMEM249, TMEM262 and EFCAB9. HSPA1 may be an additional auxiliary complex member. The core complex members CATSPER1, CATSPER2, CATSPER3 and CATSPER4 form a heterotetrameric channel. The auxiliary CATSPERB, CATSPERG, CATSPERD and CATSPERE subunits form a pavilion-like structure over the pore which stabilizes the complex through interactions with CATSPER4, CATSPER3, CATSPER1 and CATSPER2 respectively. SLCO6C1 interacts with CATSPERE and TMEM262/CATSPERH interacts with CATSPERB, further stabilizing the complex. C2CD6/CATSPERT interacts at least with CATSPERD and is required for targeting the CatSper complex in the flagellar membrane. Expressed in cauda sperm (at protein level).

The protein localises to the cell projection. The protein resides in the cilium. It is found in the flagellum membrane. Its function is as follows. Auxiliary component of the CatSper complex, a complex involved in sperm cell hyperactivation. Sperm cell hyperactivation is needed for sperm motility which is essential late in the preparation of sperm for fertilization. Required for CatSper complex targeting and trafficking into the quadrilinear nanodomains. Targets the preassembled CatSper complexes to elongating flagella, where it links the channel-carrying vesicles and motor proteins. In Mus musculus (Mouse), this protein is Cation channel sperm-associated targeting subunit tau.